The following is a 790-amino-acid chain: Protein SEY1 (790 aa).

Residues 1-692 (MELSEGELSH…KRSIVQHITQ (692 aa)) lie on the Cytoplasmic side of the membrane. In terms of domain architecture, GB1/RHD3-type G spans 55-284 (GNNYHIISVF…VSNELFKPEY (230 aa)). 65–72 (GSQSTGKS) contacts GTP. Residues 693-713 (IPYYIYLIILVLGWNEFMAII) form a helical membrane-spanning segment. Residues 714 to 716 (RNP) lie on the Lumenal side of the membrane. The helical transmembrane segment at 717-737 (LFFSLSIVLGATVYVLYYLGL) threads the bilayer. Residues 738–790 (LRPALVVAQRTMDEVIVMAKTKLREVLIDDHEVTGRQLNKMAGSKENIELDDM) are Cytoplasmic-facing.

The protein belongs to the TRAFAC class dynamin-like GTPase superfamily. GB1/RHD3 GTPase family. RHD3 subfamily.

The protein localises to the endoplasmic reticulum membrane. Cooperates with the reticulon proteins and tubule-shaping DP1 family proteins to generate and maintain the structure of the tubular endoplasmic reticulum network. Has GTPase activity, which is required for its function in ER organization. Required for virulence and resistance to cycloheximide. In Candida albicans (strain SC5314 / ATCC MYA-2876) (Yeast), this protein is Protein SEY1.